The primary structure comprises 335 residues: Tryptophan--tRNA ligase (335 aa).

ATP-binding positions include 19 to 21 and 28 to 29; these read QPS and GN. The short motif at 20–29 is the 'HIGH' region element; the sequence is PSSGMLHLGN. Asp143 serves as a coordination point for L-tryptophan. ATP is bound by residues 155 to 157, Ile192, and 201 to 205; these read GAD and KMSKS. The short motif at 201-205 is the 'KMSKS' region element; sequence KMSKS.

It belongs to the class-I aminoacyl-tRNA synthetase family. As to quaternary structure, homodimer.

The protein localises to the cytoplasm. It carries out the reaction tRNA(Trp) + L-tryptophan + ATP = L-tryptophyl-tRNA(Trp) + AMP + diphosphate + H(+). Catalyzes the attachment of tryptophan to tRNA(Trp). In Tropheryma whipplei (strain TW08/27) (Whipple's bacillus), this protein is Tryptophan--tRNA ligase.